A 314-amino-acid chain; its full sequence is GDSL-like esterase Rv1075c (314 aa).

Residues 1 to 21 (MPRRSTIALATAGALASTGTA) form the signal peptide. S80 functions as the Nucleophile in the catalytic mechanism. D244 functions as the Proton donor in the catalytic mechanism. H247 functions as the Proton acceptor in the catalytic mechanism. Residues 276-314 (IHETPSRPGTATLEPGHTRHSMMSRLRRPRPARAVPTGG) form a disordered region. Residues 293-306 (TRHSMMSRLRRPRP) are compositionally biased toward basic residues.

Belongs to the 'GDSL' lipolytic enzyme family.

It carries out the reaction an acetyl ester + H2O = an aliphatic alcohol + acetate + H(+). The enzyme catalyses a butanoate ester + H2O = an aliphatic alcohol + butanoate + H(+). It catalyses the reaction triacetin + H2O = diacetylglycerol + acetate + H(+). The catalysed reaction is 1,2,3-tributanoylglycerol + H2O = dibutanoylglycerol + butanoate + H(+). With respect to regulation, esterase activity is significantly inhibited by the serine modifier phenylmethylsulfonyl fluoride (PMSF). Completely inhibited by diethyl pyrocarbonate. Functionally, esterase that preferentially hydrolyzes short-chain fatty acids, particularly pNP-acetate (C2) and pNP-butyrate (C4). Also has weak activity with pNP-hexanoate (C6) and pNP-octanoate (C8). It can also hydrolyze short-chain tryglycerides such as triacetin and tributyrin. Important for intracellular survival. This is GDSL-like esterase Rv1075c from Mycobacterium tuberculosis (strain ATCC 25618 / H37Rv).